We begin with the raw amino-acid sequence, 806 residues long: Phosphatidylinositol 4-kinase beta (806 aa).

The PIK helical domain maps to 55-247 (LDKVKLIRGS…GTKLRKLILS (193 aa)). Disordered stretches follow at residues 69–104 (LDKI…SASR) and 253–310 (AHKK…DEPV). The segment covering 283-302 (DATVSISLSSNLKRTSSNPK) has biased composition (polar residues). In terms of domain architecture, PI3K/PI4K catalytic spans 525 to 791 (EPWQEKVRRI…MVDGSMRSIT (267 aa)). Residues 531–537 (VRRIREG) form a G-loop region. The interval 658–666 (QVKDRHNGN) is catalytic loop. An activation loop region spans residues 677-701 (HIDFGFILSSSPRNLGFETSAFKLT).

This sequence belongs to the PI3/PI4-kinase family. Type III PI4K subfamily. Requires Mg(2+) as cofactor. Mn(2+) serves as cofactor.

Its subcellular location is the endomembrane system. The protein resides in the mitochondrion outer membrane. It is found in the rough endoplasmic reticulum membrane. It catalyses the reaction a 1,2-diacyl-sn-glycero-3-phospho-(1D-myo-inositol) + ATP = a 1,2-diacyl-sn-glycero-3-phospho-(1D-myo-inositol 4-phosphate) + ADP + H(+). Its function is as follows. Phosphorylates phosphatidylinositol (PI) in the first committed step in the production of the second messenger inositol-1,4,5,-trisphosphate (PIP). May play an important role in the inner ear development. This Xenopus tropicalis (Western clawed frog) protein is Phosphatidylinositol 4-kinase beta (pi4kb).